The primary structure comprises 541 residues: Protein wntless homolog A (541 aa).

Positions 1–28 (MAGAIIENMSTKKLCMVGVALLLLQVLA) are cleaved as a signal peptide. Residues 29-232 (FLVGGLIAPK…SIFQNGGFTM (204 aa)) lie on the Lumenal side of the membrane. The helical transmembrane segment at 233-253 (VWFAMKTFLTPSIIIIMIWYW) threads the bilayer. Residues 254–268 (RRITMMTRSPVLLEK) are Cytoplasmic-facing. Residues 269–289 (VIFALGFSMTFINIPVEWFSI) form a helical membrane-spanning segment. The Lumenal portion of the chain corresponds to 290–303 (GYDWTWMLLFGDIR). Residues 304 to 324 (QGIFYAMLLSFWIIFCGEHMM) form a helical membrane-spanning segment. Residues 325 to 331 (DQTERNR) lie on the Cytoplasmic side of the membrane. Residues 332–352 (ISVYWKQVGPIAFGSCCLFIF) traverse the membrane as a helical segment. The Lumenal segment spans residues 353–379 (DMCERGVQLKNPFYSIWTTDVGAEIAM). Residues 380 to 400 (AFIIVAGICACLYFLFLCFMV) form a helical membrane-spanning segment. Residues 401 to 431 (YQVFRNISGKQSNLPAMTKARRLHYEGLIFR) are Cytoplasmic-facing. Residues 432 to 452 (FKFLMIITLACAALTIVFFIT) traverse the membrane as a helical segment. Residues 453–471 (TQITEGNWKLGDLSIELNS) lie on the Lumenal side of the membrane. A helical membrane pass occupies residues 472-492 (AFFTGVYGMWNLYVFALMFLY). Residues 493 to 541 (APSHKHYGDGQSNDGAGMSSGEELQLTTTITHIDGPTEVYRLAGKEAQE) lie on the Cytoplasmic side of the membrane.

This sequence belongs to the wntless family.

It localises to the golgi apparatus membrane. It is found in the cytoplasmic vesicle membrane. Required for a subset of Wnt-dependent developmental processes, in particular, eye and pronephros development. Regulates the secretion of wnt4, which is required for eye development. In Xenopus laevis (African clawed frog), this protein is Protein wntless homolog A (wls-a).